Consider the following 333-residue polypeptide: MYSLLRPLLFRLDAEKAHSLTLSLLHYLPGFYFRKMAGQPVHAMGLVFPHQVGLAAGLDKNGEHLDALAKLGFSFIELGTVTPKGQTGNPKPRLFRIAEANAIINRMGFNNSGVDVLVENVKSANYKGILGINIGKNKETNLNQAADDYLYCFRKVYDHASYVTINISSPNTPDLRQLQQGDYFAELLAQLQKEQIKLADQYGRHVPLVVKVSPDETDETLKQMTDIILQYGIEGIIATNTTCSREMVKNLPCSEEQGGLSGRPLMELSTRCLRLLKQYVGNDVTLIGVGGIDSLESAKDKINAGASLLQVYSGLVYKGPELIHDIVSGLNAV.

FMN is bound by residues 56–60 (AGLDK) and threonine 80. Residue lysine 60 participates in substrate binding. 105 to 109 (NRMGF) lines the substrate pocket. FMN-binding residues include asparagine 133 and asparagine 166. Asparagine 166 is a substrate binding site. Catalysis depends on serine 169, which acts as the Nucleophile. Asparagine 171 is a substrate binding site. FMN-binding residues include lysine 211 and threonine 239. Residue 240–241 (NT) participates in substrate binding. FMN-binding positions include glycine 262, glycine 291, and 312 to 313 (YS).

The protein belongs to the dihydroorotate dehydrogenase family. Type 2 subfamily. Monomer. FMN serves as cofactor.

Its subcellular location is the cell membrane. The enzyme catalyses (S)-dihydroorotate + a quinone = orotate + a quinol. Its pathway is pyrimidine metabolism; UMP biosynthesis via de novo pathway; orotate from (S)-dihydroorotate (quinone route): step 1/1. Functionally, catalyzes the conversion of dihydroorotate to orotate with quinone as electron acceptor. In Legionella pneumophila (strain Lens), this protein is Dihydroorotate dehydrogenase (quinone).